Here is a 368-residue protein sequence, read N- to C-terminus: 3-dehydroquinate synthase (368 aa).

NAD(+)-binding positions include 112 to 116, 136 to 137, Lys149, Lys158, and 176 to 179; these read GVIGD, TT, and TLIT. Residues Glu191, His256, and His273 each coordinate Zn(2+).

The protein belongs to the sugar phosphate cyclases superfamily. Dehydroquinate synthase family. The cofactor is Co(2+). Requires Zn(2+) as cofactor. It depends on NAD(+) as a cofactor.

Its subcellular location is the cytoplasm. It catalyses the reaction 7-phospho-2-dehydro-3-deoxy-D-arabino-heptonate = 3-dehydroquinate + phosphate. Its pathway is metabolic intermediate biosynthesis; chorismate biosynthesis; chorismate from D-erythrose 4-phosphate and phosphoenolpyruvate: step 2/7. In terms of biological role, catalyzes the conversion of 3-deoxy-D-arabino-heptulosonate 7-phosphate (DAHP) to dehydroquinate (DHQ). This chain is 3-dehydroquinate synthase, found in Prochlorococcus marinus (strain NATL2A).